The sequence spans 273 residues: Arginine and glutamate-rich protein 1 (273 aa).

Composition is skewed to basic residues over residues 1-29 (MGRS…RSRS) and 37-58 (VRKR…RSRS). Positions 1 to 74 (MGRSRSRSSS…VSRRERDRER (74 aa)) are necessary and sufficient for RNA binding. Residues 1–113 (MGRSRSRSSS…EEKKAEFERQ (113 aa)) form a disordered region. Phosphoserine is present on residues serine 58 and serine 60. Position 61 is a phosphothreonine (threonine 61). Composition is skewed to basic and acidic residues over residues 66–84 (SRRE…RIDI) and 93–113 (SSLD…FERQ). The necessary and sufficient for transcriptional regulation stretch occupies residues 75–273 (ASSPPDRIDI…KLSFSLKTQD (199 aa)). Serine 76 and serine 77 each carry phosphoserine. Residues 172–176 (LLEEL) carry the LXXLL motif 1; degenerate motif. The LXXLL motif 2; degenerate motif lies at 201-205 (LERIL). The span at 238–253 (MKLEQERQRQQKEEQK) shows a compositional bias: basic and acidic residues. Residues 238 to 273 (MKLEQERQRQQKEEQKIILGKGKSRPKLSFSLKTQD) form a disordered region. Serine 266 is subject to Phosphoserine.

The protein belongs to the ARGLU1 family. Interacts with MED1; the interaction is direct. Interacts with PUF60, U2AF2 and JMJD6; may interact with other proteins involved in RNA processing and splicing.

It is found in the nucleus. The protein localises to the nucleus speckle. It localises to the chromosome. Its function is as follows. Dual function regulator of gene expression; regulator of transcription and modulator of alternative splicing. General coactivator of nuclear receptor-induced gene expression, including genes activated by the glucocorticoid receptor NR3C1. Binds to a subset of pre-mRNAs and to components of the spliceosome machinery to directly modulate basal alternative splicing; involved in simple and complex cassette exon splicing events. Binds its own pre-mRNA and regulates its alternative splicing and degradation; one of the alternatively spliced products is a stable intronic sequence RNA (sisRNA) that binds the protein to regulate its ability to affect splicing. Binding of the sisRNA stimulates phase separation and localization to nuclear speckles, which may contribute to activation of nuclear receptor-induced gene expression. May also indirectly modulate alternative splicing. Regulates transcription of genes involved in heart development, neuronal cell function, protein localization and chromatin localization. Regulates splicing of genes involved in neurogenesis and chromatin organization. Essential for central nervous system development. Required for the estrogen-dependent expression of ESR1 target genes. Can act in cooperation with MED1. The chain is Arginine and glutamate-rich protein 1 (ARGLU1) from Bos taurus (Bovine).